A 262-amino-acid polypeptide reads, in one-letter code: Virulence plasmid protein pGP6-D-related protein (262 aa).

The protein belongs to the UPF0137 (pGP6-D) family.

This Chlamydia muridarum (strain MoPn / Nigg) protein is Virulence plasmid protein pGP6-D-related protein.